A 207-amino-acid chain; its full sequence is Thiamine-phosphate synthase (207 aa).

4-amino-2-methyl-5-(diphosphooxymethyl)pyrimidine is bound by residues 36 to 40 and aspartate 68; that span reads QLRIK. Mg(2+) contacts are provided by aspartate 69 and aspartate 88. Serine 106 lines the 4-amino-2-methyl-5-(diphosphooxymethyl)pyrimidine pocket. 132 to 134 contributes to the 2-[(2R,5Z)-2-carboxy-4-methylthiazol-5(2H)-ylidene]ethyl phosphate binding site; the sequence is TKT. Position 135 (lysine 135) interacts with 4-amino-2-methyl-5-(diphosphooxymethyl)pyrimidine. Residues glycine 162 and 182 to 183 each bind 2-[(2R,5Z)-2-carboxy-4-methylthiazol-5(2H)-ylidene]ethyl phosphate; that span reads VS.

This sequence belongs to the thiamine-phosphate synthase family. It depends on Mg(2+) as a cofactor.

It carries out the reaction 2-[(2R,5Z)-2-carboxy-4-methylthiazol-5(2H)-ylidene]ethyl phosphate + 4-amino-2-methyl-5-(diphosphooxymethyl)pyrimidine + 2 H(+) = thiamine phosphate + CO2 + diphosphate. The enzyme catalyses 2-(2-carboxy-4-methylthiazol-5-yl)ethyl phosphate + 4-amino-2-methyl-5-(diphosphooxymethyl)pyrimidine + 2 H(+) = thiamine phosphate + CO2 + diphosphate. The catalysed reaction is 4-methyl-5-(2-phosphooxyethyl)-thiazole + 4-amino-2-methyl-5-(diphosphooxymethyl)pyrimidine + H(+) = thiamine phosphate + diphosphate. The protein operates within cofactor biosynthesis; thiamine diphosphate biosynthesis; thiamine phosphate from 4-amino-2-methyl-5-diphosphomethylpyrimidine and 4-methyl-5-(2-phosphoethyl)-thiazole: step 1/1. Its function is as follows. Condenses 4-methyl-5-(beta-hydroxyethyl)thiazole monophosphate (THZ-P) and 2-methyl-4-amino-5-hydroxymethyl pyrimidine pyrophosphate (HMP-PP) to form thiamine monophosphate (TMP). The protein is Thiamine-phosphate synthase of Pyrococcus abyssi (strain GE5 / Orsay).